Here is a 406-residue protein sequence, read N- to C-terminus: Zinc finger CCCH domain-containing protein 15 homolog (406 aa).

Low complexity predominate over residues 1–11 (MPPKKAPAGPS). Residues 1 to 70 (MPPKKAPAGP…DKKKDEKEKK (70 aa)) are disordered. Residues 12–28 (KKTEQKKKEKVIEDKTF) are compositionally biased toward basic and acidic residues. Low complexity predominate over residues 38–50 (QQKFIQQVQKQVQ). Over residues 56-70 (PRQDGDKKKDEKEKK) the composition is skewed to basic and acidic residues. Residues 57 to 82 (RQDGDKKKDEKEKKLADLREMASIFK) are a coiled coil. 2 C3H1-type zinc fingers span residues 94–121 (DPKS…HDLS) and 166–203 (PTTE…HALP). The disordered stretch occupies residues 336–382 (VDGSGTIASSTRLLDQATEAAKTAAAEDGAASDDENPSSSAPANDAA). Composition is skewed to low complexity over residues 352–364 (ATEA…AEDG) and 372–382 (PSSSAPANDAA).

The protein belongs to the ZC3H15/TMA46 family.

This Drosophila pseudoobscura pseudoobscura (Fruit fly) protein is Zinc finger CCCH domain-containing protein 15 homolog.